A 312-amino-acid chain; its full sequence is Urease accessory protein 7 (312 aa).

Residues 28-86 (QEATGTDSHHAHHHHTPSGASSAISHTHDNMPHDHGQFHDHGPGLWTPEEHGHTHEHLE) are disordered. The tract at residues 36–87 (HHAHHHHTPSGASSAISHTHDNMPHDHGQFHDHGPGLWTPEEHGHTHEHLEH) is histine rich nickel-binding domain. A compositionally biased stretch (basic and acidic residues) spans 53 to 86 (HTHDNMPHDHGQFHDHGPGLWTPEEHGHTHEHLE). The short motif at 115–122 (GPVGSGKT) is the GTP binding P-loop element. The Switch domain 1 motif lies at 147-154 (TREDQEFL). Residues 171 to 172 (GG) carry the switch domain 2 motif.

The protein belongs to the SIMIBI class G3E GTPase family. UreG subfamily. In terms of assembly, URE4, URE6 and URE7 may form a complex that acts as a GTP-hydrolysis-dependent molecular chaperone, activating the urease apoprotein URE1.

Its function is as follows. Urease accessory protein that binds 2 nickel atoms likely via its conserved histidine-rich domain and supplies nickel for the functional urease URE1. Has probably a dual function as a nickel chaperone and GTPase. Plays a role in host brain invasion. The chain is Urease accessory protein 7 from Cryptococcus neoformans var. grubii serotype A (strain H99 / ATCC 208821 / CBS 10515 / FGSC 9487) (Filobasidiella neoformans var. grubii).